We begin with the raw amino-acid sequence, 163 residues long: Olfactory marker protein (163 aa).

Ala-2 is subject to N-acetylalanine.

Belongs to the olfactory marker protein family. In terms of assembly, interacts with BEX1 and BEX2. Uniquely associated with mature olfactory receptor neurons.

The protein localises to the cytoplasm. May act as a modulator of the olfactory signal-transduction cascade. The sequence is that of Olfactory marker protein (Omp) from Rattus norvegicus (Rat).